Reading from the N-terminus, the 473-residue chain is ATP synthase subunit beta 2 (473 aa).

ATP is bound at residue 158–165 (GGAGVGKT).

The protein belongs to the ATPase alpha/beta chains family. F-type ATPases have 2 components, CF(1) - the catalytic core - and CF(0) - the membrane proton channel. CF(1) has five subunits: alpha(3), beta(3), gamma(1), delta(1), epsilon(1). CF(0) has three main subunits: a(1), b(2) and c(9-12). The alpha and beta chains form an alternating ring which encloses part of the gamma chain. CF(1) is attached to CF(0) by a central stalk formed by the gamma and epsilon chains, while a peripheral stalk is formed by the delta and b chains.

The protein localises to the cell membrane. The enzyme catalyses ATP + H2O + 4 H(+)(in) = ADP + phosphate + 5 H(+)(out). Functionally, produces ATP from ADP in the presence of a proton gradient across the membrane. The catalytic sites are hosted primarily by the beta subunits. This chain is ATP synthase subunit beta 2, found in Listeria welshimeri serovar 6b (strain ATCC 35897 / DSM 20650 / CCUG 15529 / CIP 8149 / NCTC 11857 / SLCC 5334 / V8).